The primary structure comprises 431 residues: MVNLEPMHTEIKMSGDVADSTDTRSTFGQVEPGNDRNGLDFNRQIKTEDLGDSLQQTLSHRPCHLSQGPTMMPGNQMSGDMASLHPLQQLVLVPGHLQSVSQFLLSQTPPGQQGLQPNLLSFPQQQSTLLLPQTGPGLASQAVGRPGLSGSSLEPHLDAPQHLPGPKHLPGPGGNDEPTDLEELEKFAKTFKQRRIKLGFTQGDVGLAMGKLYGNDFSQTTISRFEALNLSFKNMCKLKPLLEKWLNDAESSPSDPSASTPSSYPTLSEVFGRKRKKRTSIETNIRLTLEKRFQDNPKPSSEEISMIAEQLSMEKEVVRVWFCNRRQKEKRINCPVATPVKPPIYNSRLVSPSGSLGPLSVPPVHSTMPGTVTSSCSPGNNSRPSSPGSGLHASSPTASQNNSKAAMNSSSSSSFNSSGSWYRWNHPTYLH.

Disordered regions lie at residues 1-39, 130-180, and 248-267; these read MVNL…RNGL, LLPQ…EPTD, and DAES…YPTL. The region spanning 176–250 is the POU-specific domain; it reads DEPTDLEELE…LLEKWLNDAE (75 aa). The span at 251–267 shows a compositional bias: low complexity; sequence SSPSDPSASTPSSYPTL. The segment at residues 274-333 is a DNA-binding region (homeobox); it reads KRKKRTSIETNIRLTLEKRFQDNPKPSSEEISMIAEQLSMEKEVVRVWFCNRRQKEKRIN. 3 stretches are compositionally biased toward low complexity: residues 352–364, 374–390, and 398–419; these read PSGS…VPPV, SSCS…PGSG, and ASQN…NSSG. Positions 352–419 are disordered; that stretch reads PSGSLGPLSV…SSSSSFNSSG (68 aa).

It belongs to the POU transcription factor family. Class-2 subfamily. In terms of assembly, interacts (via the POU domain) with POU2AF1 and POU2AF2 in a DNA-dependent manner; this interaction recruits POU2AF2 to chromatin and increases POU2F3 transactivation activity. In terms of tissue distribution, skin, thymus, stomach and testis.

Its subcellular location is the nucleus. In terms of biological role, transcription factor that binds to the octamer motif (5'-ATTTGCAT-3'). Regulates cell type-specific differentiation pathways. Involved in the regulation of keratinocytes differentiation. The POU2F3-POU2AF2/POU2AF3 complex drives the expression of tuft-cell-specific genes, a rare chemosensory cells that coordinate immune and neural functions within mucosal epithelial tissues. The protein is POU domain, class 2, transcription factor 3 (Pou2f3) of Mus musculus (Mouse).